The chain runs to 357 residues: Transcription factor HHO1 (357 aa).

Disordered stretches follow at residues T94–I117 and N171–R198. Positions I96–E109 are enriched in acidic residues. Positions N171 to D182 are enriched in polar residues. In terms of domain architecture, HTH myb-type spans G193–R253. The H-T-H motif DNA-binding region spans P224–R249.

It is found in the nucleus. Probable factor involved in nitrate and phosphate signaling in roots. Integrates nitrate and phosphate starvation responses and adaptation of root architecture, depending on nutrient availabilities. Acts downstream of the nitrate sensor and transporter NPF6.3/NRT1.1. Represses primary root development in response to phosphate deficiency conditions, only when nitrate is present. This Arabidopsis thaliana (Mouse-ear cress) protein is Transcription factor HHO1.